The chain runs to 306 residues: NAD kinase 1 (306 aa).

D67 functions as the Proton acceptor in the catalytic mechanism. NAD(+) contacts are provided by residues 67–68 (DG), 149–150 (NE), and D181.

The protein belongs to the NAD kinase family. The cofactor is a divalent metal cation.

The protein resides in the cytoplasm. It carries out the reaction NAD(+) + ATP = ADP + NADP(+) + H(+). In terms of biological role, involved in the regulation of the intracellular balance of NAD and NADP, and is a key enzyme in the biosynthesis of NADP. Catalyzes specifically the phosphorylation on 2'-hydroxyl of the adenosine moiety of NAD to yield NADP. This chain is NAD kinase 1, found in Thermosynechococcus vestitus (strain NIES-2133 / IAM M-273 / BP-1).